The following is a 1213-amino-acid chain: DNA-directed RNA polymerase subunit beta (1213 aa).

Residues 1153–1213 are disordered; sequence RDMDEDSSEH…ADESDGKVSK (61 aa). Basic and acidic residues predominate over residues 1171 to 1198; it reads MAEEQEKKKLAEETGKSENKEDSNETAD.

Belongs to the RNA polymerase beta chain family. As to quaternary structure, the RNAP catalytic core consists of 2 alpha, 1 beta, 1 beta' and 1 omega subunit. When a sigma factor is associated with the core the holoenzyme is formed, which can initiate transcription.

It catalyses the reaction RNA(n) + a ribonucleoside 5'-triphosphate = RNA(n+1) + diphosphate. DNA-dependent RNA polymerase catalyzes the transcription of DNA into RNA using the four ribonucleoside triphosphates as substrates. In Lactobacillus acidophilus (strain ATCC 700396 / NCK56 / N2 / NCFM), this protein is DNA-directed RNA polymerase subunit beta.